The chain runs to 91 residues: Small ribosomal subunit protein bS16 (91 aa).

The protein belongs to the bacterial ribosomal protein bS16 family.

The sequence is that of Small ribosomal subunit protein bS16 from Ruthia magnifica subsp. Calyptogena magnifica.